Reading from the N-terminus, the 128-residue chain is Large ribosomal subunit protein eL22 (128 aa).

Threonine 62 carries the post-translational modification Phosphothreonine. Serine 66 is modified (phosphoserine). An N6-succinyllysine modification is found at lysine 69.

Belongs to the eukaryotic ribosomal protein eL22 family. Component of the large ribosomal subunit.

The protein resides in the cytoplasm. Functionally, component of the large ribosomal subunit. The ribosome is a large ribonucleoprotein complex responsible for the synthesis of proteins in the cell. In Sus scrofa (Pig), this protein is Large ribosomal subunit protein eL22 (RPL22).